The following is a 117-amino-acid chain: Large ribosomal subunit protein bL20 (117 aa).

This sequence belongs to the bacterial ribosomal protein bL20 family.

Its function is as follows. Binds directly to 23S ribosomal RNA and is necessary for the in vitro assembly process of the 50S ribosomal subunit. It is not involved in the protein synthesizing functions of that subunit. The chain is Large ribosomal subunit protein bL20 from Rickettsia canadensis (strain McKiel).